Reading from the N-terminus, the 148-residue chain is Small ribosomal subunit protein uS7m (148 aa).

The protein belongs to the universal ribosomal protein uS7 family. In terms of assembly, part of the small ribosomal subunit.

The protein localises to the mitochondrion. One of the primary rRNA binding proteins, it binds directly to 18S rRNA where it nucleates assembly of the head domain of the small subunit. This Arabidopsis thaliana (Mouse-ear cress) protein is Small ribosomal subunit protein uS7m (RPS7).